The chain runs to 264 residues: DNA-directed RNA polymerase subunit Rpo3 (264 aa).

[3Fe-4S] cluster is bound by residues Cys-203, Cys-206, and Cys-209.

It belongs to the archaeal Rpo3/eukaryotic RPB3 RNA polymerase subunit family. As to quaternary structure, part of the RNA polymerase complex. Requires [3Fe-4S] cluster as cofactor.

The protein localises to the cytoplasm. The enzyme catalyses RNA(n) + a ribonucleoside 5'-triphosphate = RNA(n+1) + diphosphate. DNA-dependent RNA polymerase (RNAP) catalyzes the transcription of DNA into RNA using the four ribonucleoside triphosphates as substrates. The protein is DNA-directed RNA polymerase subunit Rpo3 of Methanothermobacter thermautotrophicus (strain ATCC 29096 / DSM 1053 / JCM 10044 / NBRC 100330 / Delta H) (Methanobacterium thermoautotrophicum).